The sequence spans 256 residues: Thiazole synthase (256 aa).

K91 functions as the Schiff-base intermediate with DXP in the catalytic mechanism. Residues G152, 179-180 (AG), and 201-202 (NT) each bind 1-deoxy-D-xylulose 5-phosphate.

The protein belongs to the ThiG family. As to quaternary structure, homotetramer. Forms heterodimers with either ThiH or ThiS.

The protein resides in the cytoplasm. The enzyme catalyses [ThiS sulfur-carrier protein]-C-terminal-Gly-aminoethanethioate + 2-iminoacetate + 1-deoxy-D-xylulose 5-phosphate = [ThiS sulfur-carrier protein]-C-terminal Gly-Gly + 2-[(2R,5Z)-2-carboxy-4-methylthiazol-5(2H)-ylidene]ethyl phosphate + 2 H2O + H(+). It functions in the pathway cofactor biosynthesis; thiamine diphosphate biosynthesis. Catalyzes the rearrangement of 1-deoxy-D-xylulose 5-phosphate (DXP) to produce the thiazole phosphate moiety of thiamine. Sulfur is provided by the thiocarboxylate moiety of the carrier protein ThiS. In vitro, sulfur can be provided by H(2)S. The polypeptide is Thiazole synthase (Erwinia tasmaniensis (strain DSM 17950 / CFBP 7177 / CIP 109463 / NCPPB 4357 / Et1/99)).